The sequence spans 3739 residues: Cardiomyopathy-associated protein 5 (3739 aa).

Disordered regions lie at residues 1–205, 268–814, 835–884, 967–1270, 1288–1313, 1325–1637, 1650–1969, 1986–2016, 2065–2246, 2273–2318, 2377–2498, 2513–2532, and 2579–2616; these read MESG…PPIT, SLEP…SAFV, VSVS…AIQS, LSED…SDVP, TQAS…RDAK, SSAL…NLVS, EMNR…EKGK, SSIP…AIEP, FLSN…WETR, AVGE…LALD, VYPE…SAVE, KKQE…TSKD, and SADG…SEDQ. Over residues 18–47 the composition is skewed to acidic residues; that stretch reads ADEEVAQELETEEESEGEGEETAAESEEEP. Positions 48–62 are enriched in basic and acidic residues; sequence DARLSDEDEEGKTKQ. The span at 84–106 shows a compositional bias: polar residues; sequence TWETNSSRSSTPWASGESQTSGI. A compositionally biased stretch (basic residues) spans 130–153; the sequence is RTRKRTQKSKRGSPSLRRKGSKKR. Ser-155 carries the phosphoserine modification. Composition is skewed to polar residues over residues 156–175 and 325–336; these read LESQ…SESP and ADSNLNVPSSTE. A coiled-coil region spans residues 380 to 406; that stretch reads ATMVLERAKEELEQNAQGKESSEDDAS. Basic and acidic residues-rich tracts occupy residues 479 to 637, 644 to 663, and 670 to 730; these read IVHR…REEE, SIVH…REEE, and SIVH…ERGV. 2 consecutive repeat copies span residues 482 to 493 and 494 to 505. The 20 X 12 AA approximate tandem repeats of R-[DE]-[EK]-[EG]-H-[AV]-P-E-[PS]-[IM]-V-[HLR] stretch occupies residues 482–720; that stretch reads REEEHAPEPI…EEHAPEPMVH (239 aa). A 3; approximate repeat occupies 506–519; it reads REEEHAPEPESIVH. Repeat unit 4 spans residues 520 to 531; it reads REEEHAPESIVH. Residues 532-545 form a 5; approximate repeat; sequence REEEHAPEPVPIVH. Residues 546–559 form a 6; approximate repeat; the sequence is REEEHAPEPESIVH. A run of 4 repeats spans residues 560–571, 572–583, 584–595, and 596–607. The 11; approximate repeat unit spans residues 608–621; the sequence is REEEHVPEPESIVR. The 12; approximate repeat unit spans residues 622 to 633; it reads KGEEHAPEPIVH. The stretch at 634–647 is one 14; approximate repeat; the sequence is REEEQVPEPESIVH. Repeat unit 15 spans residues 648 to 659; it reads REEEHAPEPIVH. The 16; approximate repeat unit spans residues 660–673; the sequence is REEEQVPEPESIVH. 4 tandem repeats follow at residues 674–685, 686–696, 697–708, and 709–720. Over residues 740-756 the composition is skewed to acidic residues; it reads TEPEDSSLEEEIIELDY. Ser-850 bears the Phosphoserine mark. Composition is skewed to polar residues over residues 861-884 and 1151-1161; these read PAMT…AIQS and CLTSPSEQTVL. Composition is skewed to basic and acidic residues over residues 1188–1197 and 1230–1242; these read AETEQNKVEP and EHSE…EESS. Residues 1337 to 1351 are compositionally biased toward polar residues; that stretch reads TSVLPTSQPSVSPES. 2 stretches are compositionally biased toward basic and acidic residues: residues 1441–1460 and 1476–1486; these read LEQR…HSPP and TEVKQESKITR. Polar residues predominate over residues 1522–1540; sequence ASSSATTVPVTKLDSNSTK. 6 stretches are compositionally biased toward basic and acidic residues: residues 1620-1631, 1697-1706, 1726-1742, 1760-1770, 1786-1803, and 1836-1850; these read NDKHEEITRSPD, IDSRDRDRSL, GPAE…ENRK, IEQKEPKRTLH, DKPE…ENLE, and EKPD…DRKP. Residues 1854–1863 are compositionally biased toward polar residues; the sequence is QLESSESTDL. 4 stretches are compositionally biased toward basic and acidic residues: residues 1874 to 1885, 1896 to 1916, 1992 to 2001, and 2153 to 2165; these read DTDHTSETRNQE, LSQE…EGRK, KVSDNEDLET, and ARKE…HKET. The span at 2181–2190 shows a compositional bias: polar residues; it reads KSAQSAFTRM. Ser-2192 carries the post-translational modification Phosphoserine. 5 stretches are compositionally biased toward basic and acidic residues: residues 2212–2244, 2279–2299, 2306–2318, 2377–2419, and 2429–2448; these read GEDR…DGWE, RMPE…RLEQ, KLME…LALD, VYPE…ETDG, and ELEK…RRFV. Position 2411 is a phosphoserine (Ser-2411). At Ser-2495 the chain carries Phosphoserine. Residues 2513-2523 are compositionally biased toward basic and acidic residues; the sequence is KKQETWSDRPT. A coiled-coil region spans residues 2640–2664; the sequence is SVDQEESEQMQDKLQYLEEKASFKS. Disordered regions lie at residues 2667 to 2725, 2742 to 2773, 2791 to 2835, 2881 to 2959, 3027 to 3047, and 3111 to 3174; these read VHDE…QPTV, LSPG…SSAE, GPEK…GMPL, EKNE…EREI, LESE…DVNL, and PEEP…QKEP. Residues 2682-2709 show a composition bias toward basic and acidic residues; the sequence is SKLEVPDRKITSLKENKTKETHKTKEEI. The interval 2731–3041 is required for RYR2 clustering; sequence YFEKYTLIDY…SSQGNEAGNA (311 aa). Over residues 2762-2773 the composition is skewed to polar residues; sequence KTLTSFPESSAE. 2 stretches are compositionally biased toward basic and acidic residues: residues 2791 to 2804 and 2812 to 2828; these read GPEK…HAEM and KPDD…DVDS. Ser-2905 bears the Phosphoserine mark. Residues 2918 to 2929 show a composition bias toward basic and acidic residues; it reads YILKDDILHDES. The segment covering 3030 to 3047 has biased composition (polar residues); sequence EPSSQGNEAGNASPDVNL. Positions 3153–3162 are enriched in basic and acidic residues; sequence VWDRTEDQSA. The interval 3187-3214 is amphipathic helix H1; that stretch reads KSLVSEMDKALDIHKDHEVSALDTAISA. The B-box coiled-coil; BBC stretch occupies residues 3215–3342; that stretch reads VKVQLGEFLE…ERLLSAMEST (128 aa). Residues 3244–3323 are a coiled coil; that stretch reads FNTIEEKCSK…REAEELDETV (80 aa). The segment at 3301–3318 is amphipathic helix H2; that stretch reads SMDTAKDTLETIVREAEE. Fibronectin type-III domains are found at residues 3374–3475 and 3476–3568; these read VPQP…TAPS and TPVI…TRGT. Residues 3421-3437 are amphipathic helix H3; it reads EINELVEEYRLTVKESC. In terms of domain architecture, B30.2/SPRY spans 3550 to 3735; the sequence is NASGTSEQSE…LHLGLEPPDS (186 aa).

In terms of assembly, interacts with PRKAR2A. Interacts with ACTN2, DES and DTNBP1/dysbindin. Interacts with DMD/dystrophin. Interacts with the calcineurin catalytic subunit PPP3CA. Interacts with TTN. Interacts with CAPN3; this interaction, which results in CMYA5 proteolysis, may protect CAPN3 from autolysis. Interacts with FSD2. In cardiac muscles, identified in a complex composed of FSD2, CMYA5 and RYR2. Phosphorylated by PKA. As to expression, expressed in skin as well as in cardiac muscle. Expressed in skeletal muscle (at protein level).

The protein resides in the nucleus. It is found in the cytoplasm. The protein localises to the perinuclear region. Its subcellular location is the myofibril. It localises to the sarcomere. The protein resides in the m line. It is found in the sarcoplasmic reticulum. Its function is as follows. May serve as an anchoring protein that mediates the subcellular compartmentation of protein kinase A (PKA) via binding to PRKAR2A. May attenuate calcineurin ability to induce slow-fiber gene program in muscle and may negatively modulate skeletal muscle regeneration. Plays a role in the assembly of ryanodine receptor (RYR2) clusters in striated muscle. The chain is Cardiomyopathy-associated protein 5 (Cmya5) from Mus musculus (Mouse).